A 321-amino-acid chain; its full sequence is D-alanine--D-alanine ligase (321 aa).

An ATP-grasp domain is found at 121–315 (RSWFLTNNIN…FTNLIEEIIK (195 aa)). 147–199 (PVKRPYVIKPLTQGSSIGVEVIFEEDDFNFADYNFPYGYQVIIEQYIKGRELQ) serves as a coordination point for ATP. 3 residues coordinate Mg(2+): Glu268, Glu282, and Asn284.

It belongs to the D-alanine--D-alanine ligase family. Mg(2+) is required as a cofactor. Requires Mn(2+) as cofactor.

It localises to the cytoplasm. It catalyses the reaction 2 D-alanine + ATP = D-alanyl-D-alanine + ADP + phosphate + H(+). The protein operates within cell wall biogenesis; peptidoglycan biosynthesis. Functionally, cell wall formation. The chain is D-alanine--D-alanine ligase from Rickettsia felis (strain ATCC VR-1525 / URRWXCal2) (Rickettsia azadi).